We begin with the raw amino-acid sequence, 486 residues long: Probable glycine dehydrogenase (decarboxylating) subunit 2 (486 aa).

Lys-269 is subject to N6-(pyridoxal phosphate)lysine.

Belongs to the GcvP family. C-terminal subunit subfamily. As to quaternary structure, the glycine cleavage system is composed of four proteins: P, T, L and H. In this organism, the P 'protein' is a heterodimer of two subunits. Pyridoxal 5'-phosphate is required as a cofactor.

The enzyme catalyses N(6)-[(R)-lipoyl]-L-lysyl-[glycine-cleavage complex H protein] + glycine + H(+) = N(6)-[(R)-S(8)-aminomethyldihydrolipoyl]-L-lysyl-[glycine-cleavage complex H protein] + CO2. The glycine cleavage system catalyzes the degradation of glycine. The P protein binds the alpha-amino group of glycine through its pyridoxal phosphate cofactor; CO(2) is released and the remaining methylamine moiety is then transferred to the lipoamide cofactor of the H protein. The chain is Probable glycine dehydrogenase (decarboxylating) subunit 2 from Chlorobium phaeobacteroides (strain DSM 266 / SMG 266 / 2430).